The sequence spans 752 residues: Kaurene synthase like 2, chloroplastic (752 aa).

The N-terminal 28 residues, 1 to 28 (MSLLLSNSALVGPKFRSSRISHASASLD), are a transit peptide targeting the chloroplast. Residues Asp538, Asp542, Asn682, and Glu690 each coordinate Mg(2+). A DDXXD motif motif is present at residues 538-542 (DDLFD).

This sequence belongs to the terpene synthase family. Mg(2+) serves as cofactor. As to expression, highly expressed in leaves.

The protein resides in the plastid. The protein localises to the chloroplast. It participates in secondary metabolite biosynthesis; terpenoid biosynthesis. Its function is as follows. Involved in the biosynthesis of ent-kaurene diterpenoids natural products such as oridonin, miltiradiene, eriocalyxin B and nezukol, known to exhibit antitumor, anti-inflammatory and antibacterial activities. Catalyzes the conversion of ent-copalyl diphosphate (ent-CPP) to ent-isopimaradiene like compounds. In Isodon rubescens (Rabdosia rubescens), this protein is Kaurene synthase like 2, chloroplastic.